A 491-amino-acid chain; its full sequence is Glutamyl-tRNA(Gln) amidotransferase subunit A (491 aa).

Active-site charge relay system residues include lysine 79 and serine 154. The Acyl-ester intermediate role is filled by serine 178.

Belongs to the amidase family. GatA subfamily. Heterotrimer of A, B and C subunits.

The catalysed reaction is L-glutamyl-tRNA(Gln) + L-glutamine + ATP + H2O = L-glutaminyl-tRNA(Gln) + L-glutamate + ADP + phosphate + H(+). Functionally, allows the formation of correctly charged Gln-tRNA(Gln) through the transamidation of misacylated Glu-tRNA(Gln) in organisms which lack glutaminyl-tRNA synthetase. The reaction takes place in the presence of glutamine and ATP through an activated gamma-phospho-Glu-tRNA(Gln). The sequence is that of Glutamyl-tRNA(Gln) amidotransferase subunit A from Alkaliphilus metalliredigens (strain QYMF).